Reading from the N-terminus, the 238-residue chain is Demethylmenaquinone methyltransferase (238 aa).

Residues T65, D85, and 109 to 110 (DA) contribute to the S-adenosyl-L-methionine site.

The protein belongs to the class I-like SAM-binding methyltransferase superfamily. MenG/UbiE family.

It catalyses the reaction a 2-demethylmenaquinol + S-adenosyl-L-methionine = a menaquinol + S-adenosyl-L-homocysteine + H(+). The protein operates within quinol/quinone metabolism; menaquinone biosynthesis; menaquinol from 1,4-dihydroxy-2-naphthoate: step 2/2. Methyltransferase required for the conversion of demethylmenaquinol (DMKH2) to menaquinol (MKH2). The polypeptide is Demethylmenaquinone methyltransferase (Roseiflexus castenholzii (strain DSM 13941 / HLO8)).